Here is a 270-residue protein sequence, read N- to C-terminus: Regulatory protein RecX (270 aa).

It belongs to the RecX family.

It is found in the cytoplasm. Its function is as follows. Modulates RecA activity. This Bacillus mycoides (strain KBAB4) (Bacillus weihenstephanensis) protein is Regulatory protein RecX.